Here is a 287-residue protein sequence, read N- to C-terminus: mRNA-capping enzyme regulatory subunit OPG124 (287 aa).

The protein belongs to the orthopoxvirus mRNA-capping enzyme regulatory subunit family. Interacts with the catalytic subunit OPG113.

The protein localises to the virion. Regulatory subunit of the mRNA cap enzyme which stabilizes the catalytic subunit and enhances its methyltransferase activity through an allosteric mechanism. Heterodimeric mRNA capping enzyme catalyzes the linkage of a N7-methyl-guanosine moiety to the first transcribed nucleotide (cap 0 structure), whereas the methyltransferase OPG102 is responsible for a second methylation at the 2'-O position of the ribose (cap 1 structure). Also involved in early viral gene transcription termination and intermediate viral gene transcription initiation. Early gene transcription termination requires the termination factor VTF, the DNA-dependent ATPase NPH-I/OPG123 and the RAP94/OPG109 subunit of the viral RNA polymerase, as well as the presence of a specific termination motif. Binds, together with RAP94/OPG109, to the termination motif 5'-UUUUUNU-3' in the nascent early mRNA. The sequence is that of mRNA-capping enzyme regulatory subunit OPG124 (OPG124) from Vaccinia virus (strain Copenhagen) (VACV).